Consider the following 159-residue polypeptide: MADARDMELIKPYNGDPFTGHLSTPISDSDFTRTFIGNLPAYRKGLSPILRGLEIGMAHGYFLIGPWVKLGPLRDSDVANLGGLISGIALILIATACLAAYGIVSFQKEEAAANPLNTAEGWSQFTAGFFVGATGGAFVAFTLLEKFDVVDGIMTGLFN.

3 helical membrane passes run 53-73 (LEIG…LGPL), 84-104 (LISG…YGIV), and 125-145 (FTAG…TLLE).

This sequence belongs to the PsaL family.

It is found in the cellular thylakoid membrane. This Cyanothece sp. (strain PCC 7425 / ATCC 29141) protein is Photosystem I reaction center subunit XI.